The chain runs to 500 residues: Lysine--tRNA ligase (500 aa).

Mg(2+) is bound by residues Glu411 and Glu418.

It belongs to the class-II aminoacyl-tRNA synthetase family. In terms of assembly, homodimer. The cofactor is Mg(2+).

The protein localises to the cytoplasm. The enzyme catalyses tRNA(Lys) + L-lysine + ATP = L-lysyl-tRNA(Lys) + AMP + diphosphate. The polypeptide is Lysine--tRNA ligase (Actinobacillus pleuropneumoniae serotype 5b (strain L20)).